An 89-amino-acid chain; its full sequence is Small ribosomal subunit protein uS15 (89 aa).

Positions 1–18 (MSLDTAEKQKLIENHQVH) are enriched in basic and acidic residues. The tract at residues 1 to 23 (MSLDTAEKQKLIENHQVHPTDTG) is disordered.

It belongs to the universal ribosomal protein uS15 family. In terms of assembly, part of the 30S ribosomal subunit. Forms a bridge to the 50S subunit in the 70S ribosome, contacting the 23S rRNA.

One of the primary rRNA binding proteins, it binds directly to 16S rRNA where it helps nucleate assembly of the platform of the 30S subunit by binding and bridging several RNA helices of the 16S rRNA. In terms of biological role, forms an intersubunit bridge (bridge B4) with the 23S rRNA of the 50S subunit in the ribosome. This is Small ribosomal subunit protein uS15 from Prochlorococcus marinus (strain AS9601).